Consider the following 449-residue polypeptide: Phosphoglucosamine mutase (449 aa).

Ser-102 (phosphoserine intermediate) is an active-site residue. Residues Ser-102, Asp-241, Asp-243, and Asp-245 each coordinate Mg(2+). A Phosphoserine modification is found at Ser-102.

It belongs to the phosphohexose mutase family. It depends on Mg(2+) as a cofactor. Activated by phosphorylation.

The catalysed reaction is alpha-D-glucosamine 1-phosphate = D-glucosamine 6-phosphate. Catalyzes the conversion of glucosamine-6-phosphate to glucosamine-1-phosphate. The sequence is that of Phosphoglucosamine mutase from Pseudoalteromonas translucida (strain TAC 125).